A 249-amino-acid polypeptide reads, in one-letter code: Phosphomannomutase 2 (249 aa).

Catalysis depends on aspartate 12, which acts as the Nucleophile. Mg(2+) is bound by residues aspartate 12 and aspartate 14. The active-site Proton donor/acceptor is the aspartate 14. The alpha-D-mannose 1-phosphate site is built by arginine 21, arginine 123, arginine 134, arginine 141, serine 179, and aspartate 181. Aspartate 209 is a Mg(2+) binding site.

Belongs to the eukaryotic PMM family. Homodimer.

The protein resides in the cytoplasm. It catalyses the reaction alpha-D-mannose 1-phosphate = D-mannose 6-phosphate. It functions in the pathway nucleotide-sugar biosynthesis; GDP-alpha-D-mannose biosynthesis; alpha-D-mannose 1-phosphate from D-fructose 6-phosphate: step 2/2. Its function is as follows. Involved in the synthesis of the GDP-mannose and dolichol-phosphate-mannose required for a number of critical mannosyl transfer reactions. The polypeptide is Phosphomannomutase 2 (pmmB) (Dictyostelium discoideum (Social amoeba)).